A 32-amino-acid chain; its full sequence is U5-ctenitoxin-Pn1a (32 aa).

3 disulfides stabilise this stretch: C3–C16, C9–C21, and C15–C30.

In terms of tissue distribution, expressed by the venom gland.

The protein localises to the secreted. Functionally, blocks voltage-gated sodium channels (Nav). Causes tail erection, scratching and a reduction in mobility at a dose level of 1.40 mg/mouse. This chain is U5-ctenitoxin-Pn1a, found in Phoneutria nigriventer (Brazilian armed spider).